A 176-amino-acid chain; its full sequence is Cytochrome b (176 aa).

The next 3 helical transmembrane spans lie at 33–53 (FGSL…FLAM), 77–98 (WLLR…YLHV), and 113–133 (WNVG…GYVL). The heme b site is built by histidine 83 and histidine 97.

The protein belongs to the cytochrome b family. The cytochrome bc1 complex contains 11 subunits: 3 respiratory subunits (MT-CYB, CYC1 and UQCRFS1), 2 core proteins (UQCRC1 and UQCRC2) and 6 low-molecular weight proteins (UQCRH/QCR6, UQCRB/QCR7, UQCRQ/QCR8, UQCR10/QCR9, UQCR11/QCR10 and a cleavage product of UQCRFS1). This cytochrome bc1 complex then forms a dimer. It depends on heme b as a cofactor.

It localises to the mitochondrion inner membrane. Its function is as follows. Component of the ubiquinol-cytochrome c reductase complex (complex III or cytochrome b-c1 complex) that is part of the mitochondrial respiratory chain. The b-c1 complex mediates electron transfer from ubiquinol to cytochrome c. Contributes to the generation of a proton gradient across the mitochondrial membrane that is then used for ATP synthesis. This chain is Cytochrome b (MT-CYB), found in Tadarida brasiliensis (Brazilian free-tailed bat).